The following is a 705-amino-acid chain: Fatty acid oxidation complex subunit alpha (705 aa).

The enoyl-CoA hydratase stretch occupies residues 1-188 (MGKTFNLTRR…KMGLVNDVVP (188 aa)). The segment at 308-705 (RKVKKAVILG…AMAAEKARFF (398 aa)) is 3-hydroxyacyl-CoA dehydrogenase.

It in the N-terminal section; belongs to the enoyl-CoA hydratase/isomerase family. In the central section; belongs to the 3-hydroxyacyl-CoA dehydrogenase family. As to quaternary structure, heterotetramer of two alpha chains (FadJ) and two beta chains (FadI).

It is found in the cytoplasm. It carries out the reaction a (3S)-3-hydroxyacyl-CoA = a (2E)-enoyl-CoA + H2O. It catalyses the reaction a 4-saturated-(3S)-3-hydroxyacyl-CoA = a (3E)-enoyl-CoA + H2O. The enzyme catalyses a (3S)-3-hydroxyacyl-CoA + NAD(+) = a 3-oxoacyl-CoA + NADH + H(+). The catalysed reaction is (3S)-3-hydroxybutanoyl-CoA = (3R)-3-hydroxybutanoyl-CoA. It participates in lipid metabolism; fatty acid beta-oxidation. Catalyzes the formation of a hydroxyacyl-CoA by addition of water on enoyl-CoA. Also exhibits 3-hydroxyacyl-CoA epimerase and 3-hydroxyacyl-CoA dehydrogenase activities. The polypeptide is Fatty acid oxidation complex subunit alpha (Shewanella oneidensis (strain ATCC 700550 / JCM 31522 / CIP 106686 / LMG 19005 / NCIMB 14063 / MR-1)).